Consider the following 474-residue polypeptide: GTPase Der (474 aa).

EngA-type G domains follow at residues 3 to 167 (FTVA…GVDR) and 204 to 379 (LRVA…MVWN). Residues 9–16 (GRPNVGKS), 56–60 (DTAGL), 119–122 (NKSE), 210–217 (GRPNAGKS), 257–261 (DTAGM), and 322–325 (NKWD) each bind GTP. The 85-residue stretch at 380–464 (KRISTAKLNR…PIRIHLKASE (85 aa)) folds into the KH-like domain.

Belongs to the TRAFAC class TrmE-Era-EngA-EngB-Septin-like GTPase superfamily. EngA (Der) GTPase family. As to quaternary structure, associates with the 50S ribosomal subunit.

GTPase that plays an essential role in the late steps of ribosome biogenesis. The protein is GTPase Der of Allorhizobium ampelinum (strain ATCC BAA-846 / DSM 112012 / S4) (Agrobacterium vitis (strain S4)).